A 253-amino-acid chain; its full sequence is Prepilin leader peptidase/N-methyltransferase (253 aa).

The chain crosses the membrane as a helical span at residues 4–24 (VYLILFSIVSLILGSFSNVVI). Cys48, Cys51, Cys73, and Cys76 together coordinate Zn(2+). Helical transmembrane passes span 80–100 (ISLS…PIYW), 106–126 (VDSF…VIDF), 129–149 (MLLP…YVQQ), 159–179 (IIGG…VRLF), 198–218 (TLIG…IAFI), and 230–250 (CLYI…FFSI).

Belongs to the peptidase A24 family. Zn(2+) serves as cofactor.

The protein resides in the cell inner membrane. It catalyses the reaction Typically cleaves a -Gly-|-Phe- bond to release an N-terminal, basic peptide of 5-8 residues from type IV prepilin, and then N-methylates the new N-terminal amino group, the methyl donor being S-adenosyl-L-methionine.. Functionally, plays an essential role in type IV pili and type II pseudopili formation by proteolytically removing the leader sequence from substrate proteins and subsequently monomethylating the alpha-amino group of the newly exposed N-terminal phenylalanine. In Vibrio cholerae serotype O1 (strain ATCC 39315 / El Tor Inaba N16961), this protein is Prepilin leader peptidase/N-methyltransferase (tcpJ).